An 80-amino-acid polypeptide reads, in one-letter code: uncharacterized protein (80 aa).

This is an uncharacterized protein from Methanothermobacter thermautotrophicus (Methanobacterium thermoformicicum).